The following is a 150-amino-acid chain: MGQLIFNQPSEDKSALEDAGDFTPRFDDRGLITAVVADAGDGELLMVAHMNAQALALTIQTGTAHYFSRSRGKIWKKGETSGNLQTVKEIRTDCDQDAIWLKVEVAGHDATCHTGRRSCFYRTVTLREGKPMLDIVDDERHFDPQDVYGK.

Asp-93 serves as a coordination point for Mg(2+). Cys-94 provides a ligand contact to Zn(2+). 2 residues coordinate Mg(2+): Asp-95 and Asp-97. Zn(2+) is bound by residues Cys-112 and Cys-119.

The protein belongs to the PRA-CH family. Homodimer. Mg(2+) is required as a cofactor. The cofactor is Zn(2+).

It localises to the cytoplasm. The catalysed reaction is 1-(5-phospho-beta-D-ribosyl)-5'-AMP + H2O = 1-(5-phospho-beta-D-ribosyl)-5-[(5-phospho-beta-D-ribosylamino)methylideneamino]imidazole-4-carboxamide. It participates in amino-acid biosynthesis; L-histidine biosynthesis; L-histidine from 5-phospho-alpha-D-ribose 1-diphosphate: step 3/9. Functionally, catalyzes the hydrolysis of the adenine ring of phosphoribosyl-AMP. The sequence is that of Phosphoribosyl-AMP cyclohydrolase from Rhizobium etli (strain ATCC 51251 / DSM 11541 / JCM 21823 / NBRC 15573 / CFN 42).